The primary structure comprises 376 residues: uncharacterized protein (376 aa).

The helical transmembrane segment at 24 to 44 (YLSIISIISVFLLNSSIVYSC) threads the bilayer. Zn(2+) is bound at residue His251.

This sequence belongs to the peptidase M23B family. The cofactor is Zn(2+).

It is found in the cell membrane. This is an uncharacterized protein from Buchnera aphidicola subsp. Baizongia pistaciae (strain Bp).